A 613-amino-acid chain; its full sequence is tRNA 5-methylaminomethyl-2-thiouridine biosynthesis bifunctional protein MnmC (613 aa).

Positions 1–225 are tRNA (mnm(5)s(2)U34)-methyltransferase; sequence MKKAKLIFKD…KREMIKAYLE (225 aa). An FAD-dependent cmnm(5)s(2)U34 oxidoreductase region spans residues 252-613; that stretch reads IGAGISSAVL…FLIRKLKKGL (362 aa).

In the N-terminal section; belongs to the methyltransferase superfamily. tRNA (mnm(5)s(2)U34)-methyltransferase family. It in the C-terminal section; belongs to the DAO family. The cofactor is FAD.

It localises to the cytoplasm. The catalysed reaction is 5-aminomethyl-2-thiouridine(34) in tRNA + S-adenosyl-L-methionine = 5-methylaminomethyl-2-thiouridine(34) in tRNA + S-adenosyl-L-homocysteine + H(+). Catalyzes the last two steps in the biosynthesis of 5-methylaminomethyl-2-thiouridine (mnm(5)s(2)U) at the wobble position (U34) in tRNA. Catalyzes the FAD-dependent demodification of cmnm(5)s(2)U34 to nm(5)s(2)U34, followed by the transfer of a methyl group from S-adenosyl-L-methionine to nm(5)s(2)U34, to form mnm(5)s(2)U34. This chain is tRNA 5-methylaminomethyl-2-thiouridine biosynthesis bifunctional protein MnmC, found in Campylobacter jejuni (strain RM1221).